Consider the following 295-residue polypeptide: Small ribosomal subunit protein uS2 (295 aa).

A disordered region spans residues 260 to 295; sequence KQAKKFSKTKNIDEETNTEFEQALNDADENKNSDNA.

It belongs to the universal ribosomal protein uS2 family.

The polypeptide is Small ribosomal subunit protein uS2 (Rickettsia felis (strain ATCC VR-1525 / URRWXCal2) (Rickettsia azadi)).